The sequence spans 82 residues: Small ribosomal subunit protein bS16 (82 aa).

The protein belongs to the bacterial ribosomal protein bS16 family.

The sequence is that of Small ribosomal subunit protein bS16 from Natranaerobius thermophilus (strain ATCC BAA-1301 / DSM 18059 / JW/NM-WN-LF).